A 366-amino-acid polypeptide reads, in one-letter code: Cytochrome c mitochondrial import factor CYC2 (366 aa).

The transit peptide at 1–50 (MLWKNYVLSSSRITRRLHKSPRKSSFSKNFFITGCLLTVGAVSSYLTYRY) directs the protein to the mitochondrion. One can recognise an FAD-binding FR-type domain in the interval 63–184 (SYFVKYKISH…RGPFIDYEFP (122 aa)).

The cofactor is FAD.

The protein resides in the mitochondrion inner membrane. Its function is as follows. Redox component that participates in c-type cytochrome biogenesis in the mitochondrial intermembrane space. May play a role in the reduction of heme prior to its ligation to apocytochrome c by cytochrome c heme lyase. Has oxidoreductase activity in vitro. This is Cytochrome c mitochondrial import factor CYC2 (CYC2) from Saccharomyces cerevisiae (strain ATCC 204508 / S288c) (Baker's yeast).